A 917-amino-acid polypeptide reads, in one-letter code: Dolichyl-phosphooligosaccharide-protein glycotransferase (917 aa).

Residues 1-10 (MTENNEKVKN) are compositionally biased toward basic and acidic residues. The interval 1–20 (MTENNEKVKNSDSANNQSSK) is disordered. The Cytoplasmic segment spans residues 1–38 (MTENNEKVKNSDSANNQSSKNSKFNFNFEDKKVKCAKT). The span at 11-20 (SDSANNQSSK) shows a compositional bias: low complexity. Residues 39–59 (ILIIIFLAFLSFQMRAQTADM) form a helical membrane-spanning segment. Topologically, residues 60–154 (GFTTNEQYLD…AMDSTVTLMN (95 aa)) are extracellular. Residues 82–84 (ALD) carry the DXD motif 1 motif. Asp84 lines the Mn(2+) pocket. The helical transmembrane segment at 155–175 (AAFWVPAILSMFLITPIFFTV) threads the bilayer. At 176-182 (RRITSSD) the chain is on the cytoplasmic side. The chain crosses the membrane as a helical span at residues 183–203 (IGGAVAAILASLSPSIFVKTV). Residues 204 to 209 (AGFSDT) lie on the Extracellular side of the membrane. Residue Asp208 coordinates Mn(2+). The short motif at 208–210 (DTP) is the DXD motif 2 element. A helical transmembrane segment spans residues 210–230 (PILEILPLLFIVWFIIEAIHY). At 231–237 (SKEKNYK) the chain is on the cytoplasmic side. Residues 238 to 260 (SLIYGLLATLMLALYPFMWSAWW) traverse the membrane as a helical segment. Residues 261 to 263 (YGY) lie on the Extracellular side of the membrane. Residues 264-286 (YIVIAFLVIYAIYKGISYNSIAK) form a helical membrane-spanning segment. Topologically, residues 287 to 308 (YTKSKNNNHKDKIESEKLEMLN) are cytoplasmic. Residues 309–329 (ILKISGLFIIGGAVLITALYG) traverse the membrane as a helical segment. Residues 330–372 (VSTTMNALQAPLNYLGLDEVSSQTGWPNVLTTVSELDTASLDE) are Extracellular-facing. The TIXE motif motif lies at 361–364 (TVSE). Mn(2+) is bound at residue Glu364. A helical membrane pass occupies residues 373–393 (IISSSLGSIHLFAIGLIGIFL). At 394–413 (SLFRKVLTPVKQISNGLAEK) the chain is on the cytoplasmic side. The chain crosses the membrane as a helical span at residues 414-434 (LDIKYALLLIIWFAVTFLAAS). The Extracellular portion of the chain corresponds to 435 to 438 (KGVR). Residue Arg438 participates in a glycophospholipid binding. A helical membrane pass occupies residues 439–459 (FVALMVPPLSIGVGIFVGFIE). Topologically, residues 460-469 (QFIKNNLDKK) are cytoplasmic. Residues 470 to 490 (YEYVAYPTIAIIVLYALFTIY) form a helical membrane-spanning segment. Residues 491-506 (RADSADLVRMLLPSNY) lie on the Extracellular side of the membrane. The helical transmembrane segment at 507–527 (VPIAEGIMLASLAVLIIYKVA) threads the bilayer. Residues 528 to 541 (ELIAESNKKLVMNK) lie on the Cytoplasmic side of the membrane. A helical membrane pass occupies residues 542 to 562 (IFMILLAIGLITPTIATIVPF). Topologically, residues 563 to 917 (YSVPTYNDGW…FSVDYGNYSK (355 aa)) are extracellular. An interacts with target acceptor peptide in protein substrate region spans residues 592-594 (WWD). Residues 592–596 (WWDNG) carry the WWDYG motif motif. The MI motif signature appears at 719-726 (MTSIASVW).

It belongs to the STT3 family. Mn(2+) serves as cofactor. Mg(2+) is required as a cofactor.

The protein localises to the cell membrane. It carries out the reaction an archaeal dolichyl phosphooligosaccharide + [protein]-L-asparagine = an archaeal dolichyl phosphate + a glycoprotein with the oligosaccharide chain attached by N-beta-D-glycosyl linkage to a protein L-asparagine.. Its pathway is cell surface structure biogenesis; S-layer biogenesis. The protein operates within protein modification; protein glycosylation. Its function is as follows. Oligosaccharyl transferase (OST) that catalyzes the initial transfer of a defined glycan (ManNAcGlc-2,3-diNAcAGlcNAc in M.voltae) from the lipid carrier dolichol-monophosphate to an asparagine residue within an Asn-X-Ser/Thr consensus motif in nascent polypeptide chains, the first step in protein N-glycosylation. Involved in the assembly of an N-linked disaccharide that decorates the S-layer glycoprotein and flagellins. In Methanococcus voltae, this protein is Dolichyl-phosphooligosaccharide-protein glycotransferase.